We begin with the raw amino-acid sequence, 337 residues long: Alcohol dehydrogenase 1 (337 aa).

Cys37, His58, Cys89, Cys92, Cys95, Cys103, and Cys145 together coordinate Zn(2+).

The protein belongs to the zinc-containing alcohol dehydrogenase family. Multimeric (with different ratios of monomers). Requires Zn(2+) as cofactor.

The catalysed reaction is a primary alcohol + NAD(+) = an aldehyde + NADH + H(+). It carries out the reaction a secondary alcohol + NAD(+) = a ketone + NADH + H(+). It functions in the pathway alcohol metabolism; ethanol biosynthesis via fermentation pathway. With respect to regulation, inhibited by ethanol. This Zymomonas mobilis subsp. mobilis (strain ATCC 31821 / ZM4 / CP4) protein is Alcohol dehydrogenase 1 (adhA).